The following is a 229-amino-acid chain: Ribonuclease 3 (229 aa).

In terms of domain architecture, RNase III spans 8 to 130; that stretch reads LTELEKIVGY…IIGAIYLDSD (123 aa). A Mg(2+)-binding site is contributed by glutamate 43. The active site involves aspartate 47. Residues aspartate 116 and glutamate 119 each contribute to the Mg(2+) site. Residue glutamate 119 is part of the active site. One can recognise a DRBM domain in the interval 157 to 227; the sequence is DPKTRLQELL…ATAALEHLQE (71 aa). Residues 201 to 229 are disordered; the sequence is SPFKGTGTSRRKAEQAAATAALEHLQESA.

The protein belongs to the ribonuclease III family. Homodimer. It depends on Mg(2+) as a cofactor.

It is found in the cytoplasm. The enzyme catalyses Endonucleolytic cleavage to 5'-phosphomonoester.. In terms of biological role, digests double-stranded RNA. Involved in the processing of primary rRNA transcript to yield the immediate precursors to the large and small rRNAs (23S and 16S). Processes some mRNAs, and tRNAs when they are encoded in the rRNA operon. Processes pre-crRNA and tracrRNA of type II CRISPR loci if present in the organism. In Idiomarina loihiensis (strain ATCC BAA-735 / DSM 15497 / L2-TR), this protein is Ribonuclease 3.